Reading from the N-terminus, the 982-residue chain is Filament-like plant protein 4 (982 aa).

Coiled-coil stretches lie at residues 39–83 (DQYT…VAKE) and 125–291 (EDRA…RKKL). The interval 311–333 (DHRQDHRQRRSPVRPSSPLMSPM) is disordered. Residues 323–333 (VRPSSPLMSPM) show a composition bias toward low complexity. The stretch at 345–401 (DNMQKFHKENDLLTERLLAMEEETKMLKEALAKRNSELQVSRNLCAKTANRLQTLEA) forms a coiled coil. Residues 423–433 (QNASNPPSMAS) show a composition bias toward polar residues. Disordered stretches follow at residues 423–466 (QNAS…AKIK) and 687–711 (QKDS…PDDC). The stretch at 452 to 475 (ELSQSNKDKANAKIKKTESANQLE) forms a coiled coil. Over residues 457–466 (NKDKANAKIK) the composition is skewed to basic and acidic residues. Positions 693–705 (EHYQNGCSQSSDS) are enriched in polar residues. The stretch at 722 to 885 (ATCKFTTEEF…AECQETILLL (164 aa)) forms a coiled coil. Composition is skewed to polar residues over residues 896 to 910 (TEQV…QQAL) and 918 to 943 (ATST…NTMK). Residues 896-982 (TEQVASSPSQ…FSRFFSTKAK (87 aa)) are disordered.

Belongs to the FPP family. In terms of assembly, interacts with WPP/MAF proteins.

In Arabidopsis thaliana (Mouse-ear cress), this protein is Filament-like plant protein 4 (FPP4).